A 483-amino-acid polypeptide reads, in one-letter code: NADPH:adrenodoxin oxidoreductase, mitochondrial (483 aa).

The N-terminal 14 residues, 1–14 (MSRYLARYMVSRYF), are a transit peptide targeting the mitochondrion. Residues alanine 32, aspartate 53, leucine 61, and leucine 97 each coordinate FAD. NADP(+)-binding positions include 169 to 172 (QGNV), 213 to 214 (RR), and glutamate 225. Residues tryptophan 391 and 398–400 (GII) each bind FAD. NADP(+) is bound at residue glycine 398.

Belongs to the ferredoxin--NADP reductase type 1 family. FAD serves as cofactor.

Its subcellular location is the mitochondrion. It catalyses the reaction 2 reduced [adrenodoxin] + NADP(+) + H(+) = 2 oxidized [adrenodoxin] + NADPH. Associates in vitro with the adrenodoxin-like protein MFDX1 to form an efficient low potential electron transfer chain that is able to reduce cytochrome C. Functions as accessory mitochondrial protein involved with BIO2 in the plant biotin synthase reaction. The sequence is that of NADPH:adrenodoxin oxidoreductase, mitochondrial from Arabidopsis thaliana (Mouse-ear cress).